The primary structure comprises 1748 residues: Tight junction protein 1 (1748 aa).

A PDZ 1 domain is found at 23–110; it reads TVTLHRAPGF…NAKITIRRKK (88 aa). A compositionally biased stretch (basic residues) spans 102 to 112; that stretch reads AKITIRRKKKV. Residues 102–189 are disordered; it reads AKITIRRKKK…QPAKPTKVTL (88 aa). Residues 123–136 are compositionally biased toward acidic residues; it reads PVSDNEEDSYDEEI. The residue at position 125 (serine 125) is a Phosphoserine. Tyrosine 132 is modified (phosphotyrosine). The segment covering 149–175 has biased composition (basic and acidic residues); it reads RRSEKIWPRDRSASRERSLSPRSDRRS. Phosphoserine occurs at positions 175, 178, and 179. Threonine 185 carries the post-translational modification Phosphothreonine. Residues 186-264 enclose the PDZ 2 domain; it reads KVTLVKSRKN…KLKMVVQRDE (79 aa). Serine 212 and serine 241 each carry phosphoserine. Position 267 is a phosphothreonine (threonine 267). Residues serine 275, serine 277, serine 280, serine 284, serine 290, serine 294, serine 297, serine 300, serine 323, serine 329, serine 334, serine 337, and serine 353 each carry the phosphoserine modification. Positions 295 to 396 are disordered; sequence LASDHSGRSH…PVYAQVGQPD (102 aa). A compositionally biased stretch (basic and acidic residues) spans 299–327; that stretch reads HSGRSHDRPPRRSRSRSPDQRSEPSDHSR. The segment covering 329–338 has biased composition (polar residues); that stretch reads SPQQPSNGSL. Residue threonine 354 is modified to Phosphothreonine. The segment covering 357–377 has biased composition (basic and acidic residues); sequence KHADDHTPKTVEEVTVERNEK. One can recognise a PDZ 3 domain in the interval 421–502; sequence SMKLVKFRKG…GEEVTILAQK (82 aa). In terms of domain architecture, SH3 spans 516–584; the sequence is GDSFYIRTHF…PNKNRAEQLA (69 aa). The Guanylate kinase-like domain maps to 598–779; it reads RADFWRFRGL…TTTINLNSMN (182 aa). A phosphoserine mark is found at serine 617 and serine 622. Residues 633 to 876 form an occludin (OCLN)-binding region region; the sequence is YERVVLREAG…GTPPESAITR (244 aa). Threonine 809 carries the post-translational modification Phosphothreonine. Serine 810 and serine 821 each carry phosphoserine. At tyrosine 822 the chain carries Phosphotyrosine. Residues serine 824, serine 828, and serine 837 each carry the phosphoserine modification. Disordered regions lie at residues 825–1081 and 1095–1587; these read APGS…LRYE and DDKQ…PEFD. Phosphothreonine occurs at positions 846, 848, 854, 861, and 868. The span at 879–892 shows a compositional bias: basic and acidic residues; sequence EPVREDSSGMHHEN. Over residues 893 to 906 the composition is skewed to low complexity; the sequence is QTYPPYSPQAQPQP. Phosphoserine is present on serine 912. Composition is skewed to polar residues over residues 934 to 953 and 963 to 979; these read PETN…NLTN and PSTS…TPST. A Phosphoserine modification is found at serine 968. Basic and acidic residues predominate over residues 998–1014; that stretch reads DPTKVYRKDPYPEEMMR. Over residues 1061–1072 the composition is skewed to polar residues; sequence YESSSYTDQFSR. Phosphoserine is present on residues serine 1071, serine 1111, and serine 1139. Basic and acidic residues predominate over residues 1110–1125; sequence HSQDLDSRQHPEESSE. Residues tyrosine 1140 and tyrosine 1165 each carry the phosphotyrosine modification. The tract at residues 1151–1371 is actin-binding region (ABR); the sequence is RASALRHEEQ…FDRRSFENKP (221 aa). Composition is skewed to basic and acidic residues over residues 1269–1286 and 1336–1347; these read KMFE…KDVN and PPEDIVRSNHYD. Tyrosine 1354 carries the phosphotyrosine modification. Phosphoserine is present on serine 1366. Low complexity predominate over residues 1389–1400; it reads SQNQSNFSSYSS. Residues 1403 to 1420 show a composition bias toward basic and acidic residues; that stretch reads KPPEADGVDRSFGEKRYE. A Phosphoserine modification is found at serine 1413. Polar residues-rich tracts occupy residues 1459-1470 and 1512-1522; these read NSVSLDFQNSLV and GTEQTQKTVTP. Residues 1538-1547 show a composition bias toward basic and acidic residues; it reads PFERKFESPK. Residues serine 1545 and serine 1617 each carry the phosphoserine modification. Residues 1634-1748 form the ZU5 domain; the sequence is ATARGIFNSN…NCVSVLIDHF (115 aa).

The protein belongs to the MAGUK family. As to quaternary structure, homodimer. Forms heterodimers TJP3. Forms a heterodimer (via PDZ2 domain) with TJP2/ZO2 (via PDZ2 domain). Interacts with OCLN, CALM, claudins, CGN/cingulin, CXADR, GJA12, GJD3 and UBN1. Interacts (via ZU5 domain) with CDC42BPB and MYZAP. Interacts (via PDZ domain) with GJA1. Interacts (via PDZ domains) with ANKRD2. Interacts with POPDC1 (via the C-terminus cytoplasmic tail). Interacts with HSPA4 and KIRREL1. Interacts with DLL1. Interacts with USP53 (via the C-terminal region). Interacts (via ABR region) with F-actin. Interacts with DNMBP (via C-terminal domain); required for the apical cell-cell junction localization of DNMBP. Interacts with SPEF1. Interacts (via N-terminus) with CTNNA1. Interacts with CLDN18. Interacts with CLDN16 (via TRV motif); this is a prerequisite for anchoring of CLDN16 at the tight junction. Interacts with PKP1; the interaction facilitates TJP1/ZO-1 localization to the plasma membrane. Interacts with PATJ (via PDZ1-6 domains); the interaction is required for attachment and extension of TJP1/ZO1 condensates along the apical cell interface. Post-translationally, phosphorylated at tyrosine redidues in response to epidermal growth factor (EGF). This response is dependent on an intact actin microfilament system. Dephosphorylated by PTPRJ. As to expression, the alpha-containing isoform is found in most epithelial cell junctions. The short isoform is found both in endothelial cells and the highly specialized epithelial junctions of renal glomeruli and Sertoli cells of the seminiferous tubules.

It localises to the cell membrane. It is found in the cell junction. Its subcellular location is the tight junction. The protein resides in the gap junction. The protein localises to the cell projection. It localises to the podosome. Functionally, TJP1, TJP2, and TJP3 are closely related scaffolding proteins that link tight junction (TJ) transmembrane proteins such as claudins, junctional adhesion molecules, and occludin to the actin cytoskeleton. Forms a multistranded TJP1/ZO1 condensate which elongates to form a tight junction belt, the belt is anchored at the apical cell membrane via interaction with PATJ. The tight junction acts to limit movement of substances through the paracellular space and as a boundary between the compositionally distinct apical and basolateral plasma membrane domains of epithelial and endothelial cells. Necessary for lumenogenesis, and particularly efficient epithelial polarization and barrier formation. Plays a role in the regulation of cell migration by targeting CDC42BPB to the leading edge of migrating cells. Plays an important role in podosome formation and associated function, thus regulating cell adhesion and matrix remodeling. With TJP2 and TJP3, participates in the junctional retention and stability of the transcription factor DBPA, but is not involved in its shuttling to the nucleus. May play a role in mediating cell morphology changes during ameloblast differentiation via its role in tight junctions. This is Tight junction protein 1 from Homo sapiens (Human).